Consider the following 424-residue polypeptide: UDP-N-acetylglucosamine 1-carboxyvinyltransferase (424 aa).

Phosphoenolpyruvate is bound at residue 22–23; it reads KN. R98 lines the UDP-N-acetyl-alpha-D-glucosamine pocket. C122 serves as the catalytic Proton donor. C122 is subject to 2-(S-cysteinyl)pyruvic acid O-phosphothioketal. UDP-N-acetyl-alpha-D-glucosamine contacts are provided by residues 127–131, D312, and I334; that span reads RPVDQ.

Belongs to the EPSP synthase family. MurA subfamily.

The protein localises to the cytoplasm. The catalysed reaction is phosphoenolpyruvate + UDP-N-acetyl-alpha-D-glucosamine = UDP-N-acetyl-3-O-(1-carboxyvinyl)-alpha-D-glucosamine + phosphate. The protein operates within cell wall biogenesis; peptidoglycan biosynthesis. Functionally, cell wall formation. Adds enolpyruvyl to UDP-N-acetylglucosamine. This chain is UDP-N-acetylglucosamine 1-carboxyvinyltransferase, found in Xanthomonas oryzae pv. oryzae (strain MAFF 311018).